Here is an 877-residue protein sequence, read N- to C-terminus: Probable Ras GTPase-activating-like protein ngap (877 aa).

One can recognise a C2 domain in the interval threonine 72–phenylalanine 218. A disordered region spans residues serine 350–asparagine 456. The span at threonine 389 to serine 409 shows a compositional bias: low complexity. Polar residues predominate over residues asparagine 410–alanine 425. Low complexity-rich tracts occupy residues serine 426 to glycine 438 and glutamate 447 to asparagine 456. The region spanning glycine 591–leucine 802 is the Ras-GAP domain. Residues leucine 820–glutamate 848 are a coiled coil.

Its function is as follows. May function as a Ras GTPase-activating protein. This chain is Probable Ras GTPase-activating-like protein ngap (ngap), found in Dictyostelium discoideum (Social amoeba).